The primary structure comprises 507 residues: tRNA(Ile)-lysidine synthase (507 aa).

24–29 (SGGGDS) provides a ligand contact to ATP. Residues 370-500 (PPEEAHMAEA…KLLRDFFARL (131 aa)) form the CMP/dCMP-type deaminase domain. 3 residues coordinate Zn(2+): His420, Cys445, and Cys448.

It belongs to the tRNA(Ile)-lysidine synthase family.

It localises to the cytoplasm. The catalysed reaction is cytidine(34) in tRNA(Ile2) + L-lysine + ATP = lysidine(34) in tRNA(Ile2) + AMP + diphosphate + H(+). In terms of biological role, ligates lysine onto the cytidine present at position 34 of the AUA codon-specific tRNA(Ile) that contains the anticodon CAU, in an ATP-dependent manner. Cytidine is converted to lysidine, thus changing the amino acid specificity of the tRNA from methionine to isoleucine. In Thermus thermophilus (strain ATCC 27634 / DSM 579 / HB8), this protein is tRNA(Ile)-lysidine synthase (tilS).